The sequence spans 1172 residues: Structural maintenance of chromosomes protein 2 (1172 aa).

32-39 is a binding site for ATP; sequence GLNGSGKS. 2 coiled-coil regions span residues 172-204 and 258-507; these read RMFEERKEKAFRTMQRKEAKVEEINTLLREEIE and SHIA…AYME. Residues 520–640 enclose the SMC hinge domain; sequence SKVKGLVAQL…CDTPESAKKV (121 aa). Residues 676–941 adopt a coiled-coil conformation; that stretch reads LLQIQKLNSL…INHLEKENDW (266 aa).

This sequence belongs to the SMC family. SMC2 subfamily. Forms a heterodimer with cut3/smc4. Component of the condensin complex, which contains the cut3 and cut14 heterodimer, and three non smc subunits that probably regulate the complex: cnd1, cnd2 and cnd3.

It is found in the nucleus. The protein localises to the cytoplasm. It localises to the chromosome. Central component of the condensin complex, a complex required for conversion of interphase chromatin into mitotic-like condense chromosomes. The condensin complex probably introduces positive supercoils into relaxed DNA in the presence of type I topoisomerases and converts nicked DNA into positive knotted forms in the presence of type II topoisomerases. This is Structural maintenance of chromosomes protein 2 (cut14) from Schizosaccharomyces pombe (strain 972 / ATCC 24843) (Fission yeast).